The chain runs to 101 residues: NADH-quinone oxidoreductase subunit K (101 aa).

A run of 3 helical transmembrane segments spans residues Leu4–Leu24, Ile30–Phe50, and Phe62–Val82.

Belongs to the complex I subunit 4L family. NDH-1 is composed of 14 different subunits. Subunits NuoA, H, J, K, L, M, N constitute the membrane sector of the complex.

The protein localises to the cell inner membrane. It carries out the reaction a quinone + NADH + 5 H(+)(in) = a quinol + NAD(+) + 4 H(+)(out). In terms of biological role, NDH-1 shuttles electrons from NADH, via FMN and iron-sulfur (Fe-S) centers, to quinones in the respiratory chain. The immediate electron acceptor for the enzyme in this species is believed to be ubiquinone. Couples the redox reaction to proton translocation (for every two electrons transferred, four hydrogen ions are translocated across the cytoplasmic membrane), and thus conserves the redox energy in a proton gradient. This Xanthomonas axonopodis pv. citri (strain 306) protein is NADH-quinone oxidoreductase subunit K.